Here is a 199-residue protein sequence, read N- to C-terminus: MACNIPNERQRTMSTSGEALYEILGLHKGASNEEIKKTYRKLALKHHPDKNPDDPGAAEKFKEINNAHTILTDMSKRNIYDKYGSLGLYVAEQFGEENVNTYFMLSSWWAKTLFVIIGLLTGCYFCCCLCCCCNCCCGRCRPKSSMPGEDFYVSPEDLEEQIKTDMEQDMDFPVILQPTNANEKTQLIREGPRSYCTDS.

S14 and S16 each carry phosphoserine. The 66-residue stretch at 19–84 (ALYEILGLHK…SKRNIYDKYG (66 aa)) folds into the J domain.

Interacts with the chaperone complex consisting of HSC70 and SGTA. Post-translationally, palmitoylated.

It is found in the membrane. This chain is DnaJ homolog subfamily C member 5B (DNAJC5B), found in Sus scrofa (Pig).